Reading from the N-terminus, the 752-residue chain is MTISPPEREEKKARVIVDNDPVPTSFELWAKPGHFDRTLARGPKTTTWIWNLHALAHDFDTHTSDLEDISRKIFAAHFGHLAVVTLWLSGMIFHGARFSNYEAWLSDPLHVKPSAQVVWPIVGQDILNGDVGGGFHGIQITSGLFQIWRGWGITNSFQLYVTAIGGLVLAGLFLFAGWFHYHKRAPKLEWFQNVESMLNHHLAVLLGCGSLGWAGHLIHVSAPTNKLLDAGVSVKDIPLPHEFILNKGLLTELYPGFASGITPFFTLNWGQYADFLTFKGGLNPVTGGLWLTDISHHHLAIAVLFIIAGHMYRTNWGIGHSIKEILENHKGPFTGEGHKGLYENMTTSWHAQLATNLAFLGSLTIIVAHHMYAMPPYPYLATDYATQLCIFTHHMWIGGFLIVGGAAHATIFMVRDYDPVVNQNNVLDRVIRHRDAIISHLNWVCIFLGFHSFGLYVHNDTMRALGRPQDMFSDTAIQLQPVFAQWVQNIHTLAPGSTAPNALEPASYAFGGGIVAVGGKVAMMPIALGTADFLVHHIHAFTIHVTVLILLKGFLFARNSRLIPDKANLGFRFPCDGPGRGGTCQVSGWDHVFLGLFWMYNSISIVIFHFSWKMQSDVWGTVDAAGNVTHITGGNWAQSALTINGWLRDFLWAQSVQVINSYGSALSAYGLMFLGAHFIWAFSLMFLFSGRGYWQELIESIVWAHNKLKVAPAIQPRALSIIQGRAVGVAHYLLGGIATTWAFFHAHILSLG.

8 helical membrane passes run 73-96, 159-182, 198-222, 294-312, 349-372, 388-414, 436-458, and 533-551; these read IFAAHFGHLAVVTLWLSGMIFHGA, LYVTAIGGLVLAGLFLFAGWFHYH, LNHHLAVLLGCGSLGWAGHLIHVSA, ISHHHLAIAVLFIIAGHMY, WHAQLATNLAFLGSLTIIVAHHMY, LCIFTHHMWIGGFLIVGGAAHATIFMV, AIISHLNWVCIFLGFHSFGLYVH, and FLVHHIHAFTIHVTVLILL. Residues cysteine 575 and cysteine 584 each coordinate [4Fe-4S] cluster. 2 helical membrane-spanning segments follow: residues 591–612 and 666–688; these read HVFLGLFWMYNSISIVIFHFSW and LSAYGLMFLGAHFIWAFSLMFLF. Chlorophyll a' is bound at residue histidine 677. The chlorophyll a site is built by methionine 685 and tyrosine 693. Tryptophan 694 contacts phylloquinone. The chain crosses the membrane as a helical span at residues 726 to 746; it reads AVGVAHYLLGGIATTWAFFHA.

The protein belongs to the PsaA/PsaB family. In terms of assembly, the PsaA/B heterodimer binds the P700 chlorophyll special pair and subsequent electron acceptors. PSI consists of a core antenna complex that captures photons, and an electron transfer chain that converts photonic excitation into a charge separation. The cyanobacterial PSI reaction center is composed of one copy each of PsaA,B,C,D,E,F,I,J,K,L,M and X, and forms trimeric complexes. It depends on PSI electron transfer chain: 5 chlorophyll a, 1 chlorophyll a', 2 phylloquinones and 3 4Fe-4S clusters. PSI core antenna: 90 chlorophyll a, 22 carotenoids, 3 phospholipids and 1 galactolipid. P700 is a chlorophyll a/chlorophyll a' dimer, A0 is one or more chlorophyll a, A1 is one or both phylloquinones and FX is a shared 4Fe-4S iron-sulfur center. as a cofactor.

The protein localises to the cellular thylakoid membrane. It catalyses the reaction reduced [plastocyanin] + hnu + oxidized [2Fe-2S]-[ferredoxin] = oxidized [plastocyanin] + reduced [2Fe-2S]-[ferredoxin]. Its function is as follows. PsaA and PsaB bind P700, the primary electron donor of photosystem I (PSI), as well as the electron acceptors A0, A1 and FX. PSI is a plastocyanin/cytochrome c6-ferredoxin oxidoreductase, converting photonic excitation into a charge separation, which transfers an electron from the donor P700 chlorophyll pair to the spectroscopically characterized acceptors A0, A1, FX, FA and FB in turn. Oxidized P700 is reduced on the lumenal side of the thylakoid membrane by plastocyanin or cytochrome c6. The sequence is that of Photosystem I P700 chlorophyll a apoprotein A1 from Mastigocladus laminosus (Fischerella sp.).